The following is a 439-amino-acid chain: Xaa-Pro dipeptidase (439 aa).

Residues aspartate 244, aspartate 255, histidine 335, glutamate 380, and glutamate 419 each coordinate Mn(2+).

Belongs to the peptidase M24B family. Bacterial-type prolidase subfamily. Mn(2+) serves as cofactor.

The catalysed reaction is Xaa-L-Pro dipeptide + H2O = an L-alpha-amino acid + L-proline. Its function is as follows. Splits dipeptides with a prolyl residue in the C-terminal position. The chain is Xaa-Pro dipeptidase from Shewanella sp. (strain ANA-3).